A 335-amino-acid chain; its full sequence is Holliday junction branch migration complex subunit RuvB (335 aa).

Residues A4–Y184 are large ATPase domain (RuvB-L). Residues I23, R24, G65, K68, T69, T70, E131–Y133, R174, Y184, and R221 each bind ATP. T69 contacts Mg(2+). A small ATPAse domain (RuvB-S) region spans residues A185–D255. The tract at residues D258–E335 is head domain (RuvB-H). DNA contacts are provided by R294, R313, and R318.

Belongs to the RuvB family. As to quaternary structure, homohexamer. Forms an RuvA(8)-RuvB(12)-Holliday junction (HJ) complex. HJ DNA is sandwiched between 2 RuvA tetramers; dsDNA enters through RuvA and exits via RuvB. An RuvB hexamer assembles on each DNA strand where it exits the tetramer. Each RuvB hexamer is contacted by two RuvA subunits (via domain III) on 2 adjacent RuvB subunits; this complex drives branch migration. In the full resolvosome a probable DNA-RuvA(4)-RuvB(12)-RuvC(2) complex forms which resolves the HJ.

It localises to the cytoplasm. It carries out the reaction ATP + H2O = ADP + phosphate + H(+). The RuvA-RuvB-RuvC complex processes Holliday junction (HJ) DNA during genetic recombination and DNA repair, while the RuvA-RuvB complex plays an important role in the rescue of blocked DNA replication forks via replication fork reversal (RFR). RuvA specifically binds to HJ cruciform DNA, conferring on it an open structure. The RuvB hexamer acts as an ATP-dependent pump, pulling dsDNA into and through the RuvAB complex. RuvB forms 2 homohexamers on either side of HJ DNA bound by 1 or 2 RuvA tetramers; 4 subunits per hexamer contact DNA at a time. Coordinated motions by a converter formed by DNA-disengaged RuvB subunits stimulates ATP hydrolysis and nucleotide exchange. Immobilization of the converter enables RuvB to convert the ATP-contained energy into a lever motion, pulling 2 nucleotides of DNA out of the RuvA tetramer per ATP hydrolyzed, thus driving DNA branch migration. The RuvB motors rotate together with the DNA substrate, which together with the progressing nucleotide cycle form the mechanistic basis for DNA recombination by continuous HJ branch migration. Branch migration allows RuvC to scan DNA until it finds its consensus sequence, where it cleaves and resolves cruciform DNA. The chain is Holliday junction branch migration complex subunit RuvB from Pasteurella multocida (strain Pm70).